Reading from the N-terminus, the 309-residue chain is Uracil phosphoribosyltransferase homolog (309 aa).

Positions 1 to 38 (MATELQCPDSMPCHNQQVNSASTPSPEQLRPGDLILDH) are disordered. Residues 13-26 (CHNQQVNSASTPSP) show a composition bias toward polar residues. Position 25 is a phosphoserine (Ser-25). Residues Arg-133, Arg-142, and 176–179 (EKGN) each bind GTP. Arg-186 is a binding site for 5-phospho-alpha-D-ribose 1-diphosphate. The GTP site is built by Arg-203 and Arg-232. 238–246 (YPILSTGNT) serves as a coordination point for 5-phospho-alpha-D-ribose 1-diphosphate. 299–301 (THF) contacts uracil.

It belongs to the UPRTase family. Highly expressed in leukocytes, liver, spleen and thymus, with lower expression in brain, lung and skeletal muscle.

The protein localises to the cytoplasm. It localises to the nucleus. The protein is Uracil phosphoribosyltransferase homolog (UPRT) of Homo sapiens (Human).